We begin with the raw amino-acid sequence, 434 residues long: Probable carboxypeptidase BDCG_03757 (434 aa).

A signal peptide spans 1-20; that stretch reads MKLSHLAAALSAQLVAPVAA. N-linked (GlcNAc...) asparagine glycosylation is found at asparagine 136 and asparagine 150. Residue aspartate 160 participates in Zn(2+) binding. Glutamate 192 functions as the Proton acceptor in the catalytic mechanism. Glutamate 193 provides a ligand contact to Zn(2+). A glycan (N-linked (GlcNAc...) asparagine) is linked at asparagine 343.

Belongs to the peptidase M20A family. The cofactor is Zn(2+).

Its subcellular location is the secreted. The sequence is that of Probable carboxypeptidase BDCG_03757 from Ajellomyces dermatitidis (strain ER-3 / ATCC MYA-2586) (Blastomyces dermatitidis).